The following is a 244-amino-acid chain: Rho-related GTP-binding protein RhoE (244 aa).

30-37 (GDSQCGKT) contributes to the GTP binding site. An Effector region motif is present at residues 52–60 (YVPTVFENY). Residues 77–81 (DTSGS) and 135–138 (CKSD) each bind GTP. Cys241 carries the cysteine methyl ester modification. Cys241 carries the S-farnesyl cysteine lipid modification. Residues 242 to 244 (TVM) constitute a propeptide, removed in mature form.

Belongs to the small GTPase superfamily. Rho family. In terms of assembly, binds ROCK1. Interacts with UBXD5. In terms of tissue distribution, ubiquitous.

The protein resides in the golgi apparatus membrane. Its function is as follows. Binds GTP but lacks intrinsic GTPase activity and is resistant to Rho-specific GTPase-activating proteins. This Homo sapiens (Human) protein is Rho-related GTP-binding protein RhoE (RND3).